Reading from the N-terminus, the 111-residue chain is Complement inhibitor CirpT1 (111 aa).

The first 19 residues, 1–19, serve as a signal peptide directing secretion; it reads MATLIAARTKRKAPRVRIF. Disulfide bonds link Cys-40–Cys-64, Cys-59–Cys-98, Cys-76–Cys-99, and Cys-85–Cys-104.

The protein belongs to the CirpT family. In terms of tissue distribution, expressed in salivary glands.

The protein resides in the secreted. Its function is as follows. Complement inhibitor. Prevents complement-mediated activation of C5 by sterically preventing direct binding of C5 to its convertase (binding with domains MG4 and MG5). Binds C5 at a different binding site than the other tick complement inhibitors OmCI and RaCI3, and the drug eculizumab. Inhibits the complement in human, rat and guinea pig, and also shows a reduced inhibition in rabbit and pig. The chain is Complement inhibitor CirpT1 from Rhipicephalus pulchellus (Yellow backed tick).